Here is a 316-residue protein sequence, read N- to C-terminus: DNA-directed RNA polymerase III subunit RPC6 (316 aa).

At alanine 2 the chain carries N-acetylalanine. Residues lysine 5 and lysine 7 each participate in a glycyl lysine isopeptide (Lys-Gly) (interchain with G-Cter in SUMO2) cross-link. Residues cysteine 287, cysteine 290, cysteine 296, and cysteine 307 each coordinate [4Fe-4S] cluster.

It belongs to the eukaryotic RPC34/RPC39 RNA polymerase subunit family. As to quaternary structure, component of the RNA polymerase III complex consisting of 17 subunits: a ten-subunit horseshoe-shaped catalytic core composed of POLR3A/RPC1, POLR3B/RPC2, POLR1C/RPAC1, POLR1D/RPAC2, POLR3K/RPC10, POLR2E/RPABC1, POLR2F/RPABC2, POLR2H/RPABC3, POLR2K/RPABC4 and POLR2L/RPABC5; a mobile stalk composed of two subunits POLR3H/RPC8 and CRCP/RPC9, protruding from the core and functioning primarily in transcription initiation; and additional subunits homologous to general transcription factors of the RNA polymerase II machinery, POLR3C/RPC3-POLR3F/RPC6-POLR3G/RPC7 heterotrimer required for transcription initiation and POLR3D/RPC4-POLR3E/RPC5 heterodimer involved in both transcription initiation and termination. Directly interacts with POLR3C. Interacts with TBP and TFIIIB90 and GTF3C4. Interacts with MAF1. As part of the RNA polymerase III complex, interacts with PKP2.

It localises to the nucleus. DNA-dependent RNA polymerase catalyzes the transcription of DNA into RNA using the four ribonucleoside triphosphates as substrates. Specific peripheric component of RNA polymerase III (Pol III) which synthesizes small non-coding RNAs including 5S rRNA, snRNAs, tRNAs and miRNAs from at least 500 distinct genomic loci. Part of POLR3C/RPC3-POLR3F/RPC6-POLR3G/RPC7 heterotrimer that coordinates the dynamics of Pol III stalk and clamp modules during the transition from apo to elongation state. Pol III plays a key role in sensing and limiting infection by intracellular bacteria and DNA viruses, including varicella zoster virus. Acts as a nuclear and cytosolic DNA sensor detecting AT-rich DNA, involved in innate immune response. Can sense non-self dsDNA that serves as template for transcription into dsRNA. The non-self RNA polymerase III transcripts, such as Epstein-Barr virus-encoded RNAs (EBERs) induce type I interferon and NF-kappa-B through the RIG-I pathway. Preferentially binds double-stranded DNA (dsDNA). The protein is DNA-directed RNA polymerase III subunit RPC6 of Homo sapiens (Human).